Reading from the N-terminus, the 252-residue chain is Ubiquinone biosynthesis O-methyltransferase (252 aa).

The S-adenosyl-L-methionine site is built by R51, G70, D91, and M136.

It belongs to the methyltransferase superfamily. UbiG/COQ3 family.

The catalysed reaction is a 3-demethylubiquinol + S-adenosyl-L-methionine = a ubiquinol + S-adenosyl-L-homocysteine + H(+). It carries out the reaction a 3-(all-trans-polyprenyl)benzene-1,2-diol + S-adenosyl-L-methionine = a 2-methoxy-6-(all-trans-polyprenyl)phenol + S-adenosyl-L-homocysteine + H(+). The protein operates within cofactor biosynthesis; ubiquinone biosynthesis. Its function is as follows. O-methyltransferase that catalyzes the 2 O-methylation steps in the ubiquinone biosynthetic pathway. This chain is Ubiquinone biosynthesis O-methyltransferase, found in Albidiferax ferrireducens (strain ATCC BAA-621 / DSM 15236 / T118) (Rhodoferax ferrireducens).